The following is a 156-amino-acid chain: Small ribosomal subunit protein uS7 (156 aa).

The protein belongs to the universal ribosomal protein uS7 family. As to quaternary structure, part of the 30S ribosomal subunit. Contacts proteins S9 and S11.

In terms of biological role, one of the primary rRNA binding proteins, it binds directly to 16S rRNA where it nucleates assembly of the head domain of the 30S subunit. Is located at the subunit interface close to the decoding center, probably blocks exit of the E-site tRNA. The protein is Small ribosomal subunit protein uS7 of Geobacillus thermodenitrificans (strain NG80-2).